Reading from the N-terminus, the 72-residue chain is Long neurotoxin 1 (72 aa).

5 cysteine pairs are disulfide-bonded: Cys3-Cys21, Cys14-Cys42, Cys27-Cys31, Cys46-Cys57, and Cys58-Cys63.

The protein belongs to the three-finger toxin family. Long-chain subfamily. Type II alpha-neurotoxin sub-subfamily. As to expression, expressed by the venom gland.

Its subcellular location is the secreted. Binds with high affinity to muscular (alpha-1/CHRNA1) and neuronal (alpha-7/CHRNA7) nicotinic acetylcholine receptor (nAChR) and inhibits acetylcholine from binding to the receptor, thereby impairing neuromuscular and neuronal transmission. The sequence is that of Long neurotoxin 1 from Naja anchietae (Anchieta's cobra).